Reading from the N-terminus, the 328-residue chain is Putative glycosyltransferase 41 (328 aa).

It belongs to the glycosyltransferase group 1 family. Glycosyltransferase 4 subfamily.

In Sulfolobus islandicus filamentous virus (isolate Iceland/Hveragerdi) (SIFV), this protein is Putative glycosyltransferase 41 (SIFV0041).